Reading from the N-terminus, the 826-residue chain is Glycerol-3-phosphate acyltransferase 1, mitochondrial (826 aa).

The Cytoplasmic segment spans residues 1 to 87; the sequence is MDESALTLGT…FFNPSIPSLG (87 aa). The tract at residues 80–120 is important for mitochondrial localization; the sequence is NPSIPSLGLRNVIYINETHTRHRGWLARRLSYVLFIQERDV. The stretch at 88–118 is an intramembrane region; the sequence is LRNVIYINETHTRHRGWLARRLSYVLFIQER. Residues 119–826 are Cytoplasmic-facing; that stretch reads DVHKGMFATN…LEYILSFVVL (708 aa). Residues 230-235 carry the HXXXXD motif motif; it reads HRSHID. Residues R278, R279, K288, R293, and R328 each coordinate CoA. At S380 the chain carries Phosphoserine. R462 is a binding site for CoA. Phosphoserine is present on residues S686 and S693. N6-acetyllysine is present on residues K778 and K782.

This sequence belongs to the GPAT/DAPAT family.

The protein localises to the mitochondrion outer membrane. It carries out the reaction sn-glycerol 3-phosphate + an acyl-CoA = a 1-acyl-sn-glycero-3-phosphate + CoA. It catalyses the reaction (9Z,12Z)-octadecadienoyl-CoA + sn-glycerol 3-phosphate = 1-(9Z,12Z)-octadecadienoyl-sn-glycero-3-phosphate + CoA. The catalysed reaction is sn-glycerol 3-phosphate + (9Z)-octadecenoyl-CoA = 1-(9Z-octadecenoyl)-sn-glycero-3-phosphate + CoA. The enzyme catalyses sn-glycerol 3-phosphate + octadecanoyl-CoA = 1-octadecanoyl-sn-glycero-3-phosphate + CoA. It carries out the reaction sn-glycerol 3-phosphate + hexadecanoyl-CoA = 1-hexadecanoyl-sn-glycero-3-phosphate + CoA. It catalyses the reaction dodecanoyl-CoA + sn-glycerol 3-phosphate = 1-dodecanoyl-sn-glycerol 3-phosphate + CoA. The catalysed reaction is 1-acyl-sn-glycero-3-phospho-(1'-sn-glycerol) + an acyl-CoA = a 1,2-diacyl-sn-glycero-3-phospho-(1'-sn-glycerol) + CoA. It functions in the pathway phospholipid metabolism; CDP-diacylglycerol biosynthesis; CDP-diacylglycerol from sn-glycerol 3-phosphate: step 1/3. Functionally, mitochondrial membrane protein that catalyzes the essential first step of biosynthesis of glycerolipids such as triglycerides, phosphatidic acids and lysophosphatidic acids. Esterifies acyl-group from acyl-coenzyme A (acyl-CoA) to the sn-1 position of glycerol-3-phosphate, to produce lysophosphatidic acid. Has a narrow hydrophobic binding cleft that selects for a linear acyl chain. Catalytic activity is higher for substrates with a 16-carbon acyl chain. The protein is Glycerol-3-phosphate acyltransferase 1, mitochondrial of Sus scrofa (Pig).